Reading from the N-terminus, the 248-residue chain is Ribonuclease 3 (248 aa).

The RNase III domain maps to 15 to 142; it reads LKAFFKQYHV…MIAALYLDLG (128 aa). Glutamate 55 provides a ligand contact to Mg(2+). Aspartate 59 is a catalytic residue. Mg(2+)-binding residues include aspartate 128 and glutamate 131. Glutamate 131 is an active-site residue. Residues 169 to 240 form the DRBM domain; sequence DYKTELQEFL…ARDALQKLAT (72 aa).

This sequence belongs to the ribonuclease III family. Homodimer. Mg(2+) is required as a cofactor.

The protein resides in the cytoplasm. It carries out the reaction Endonucleolytic cleavage to 5'-phosphomonoester.. Functionally, digests double-stranded RNA. Involved in the processing of primary rRNA transcript to yield the immediate precursors to the large and small rRNAs (23S and 16S). Processes some mRNAs, and tRNAs when they are encoded in the rRNA operon. Processes pre-crRNA and tracrRNA of type II CRISPR loci if present in the organism. This Spiroplasma citri protein is Ribonuclease 3.